The chain runs to 502 residues: ATP-dependent DNA helicase uvsW (502 aa).

The region spanning 122-280 (VFEGLVNRRR…QYVGMFGEIF (159 aa)) is the Helicase ATP-binding domain. ATP is bound at residue 135–142 (LPTSAGKS). Residues 232–235 (DECH) carry the DEAH box motif. Positions 335–501 (WIAKLAIKLA…KFNYVMKTVN (167 aa)) constitute a Helicase C-terminal domain.

As to quaternary structure, probably interacts with UvsW.1. Interacts with gp32. Mg(2+) is required as a cofactor.

It catalyses the reaction Couples ATP hydrolysis with the unwinding of duplex DNA by translocating in the 3'-5' direction.. It carries out the reaction ATP + H2O = ADP + phosphate + H(+). Unwinding activity is strongly stimulated by single-stranded binding protein gp32, the ssDNA annealing activity is partially inhibited by gp32 and strongly inhibited by ATP-gamma-S. Another study did not find gp32 stimulation of helicase activity. Holliday junction (HJ) branch migration is inhibited by ATP-gamma-S. Its function is as follows. Plays important roles in recombination-dependent DNA repair and the reorganization of stalled replication forks during viral DNA synthesis. Active on in vivo-derived T4 DNA; viral DNA is highly modified by hydroxymethylation and glucosylation of cytosine residues. Helps process Holliday junction (HJ) intermediates to mature products by catalyzing branch migration. Probably able to catalyze replication fork regression. Unwinds HJ and Y-branched but not linear double-stranded (ds)DNA; unwinding requires ATP and Mg(2+). Unwinds dsDNA with a 3'-single-stranded (ss)DNA overhang, suggesting it is a 3'-5' helicase. Another study does not find this activity. Unwinds D- and R-loops. Also anneals ssDNA; ATP stimulates annealing. Has ssDNA and dsDNA-stimulated ATPase activity, also hydrolyzes GTP in the presence of DNA. This is ATP-dependent DNA helicase uvsW from Enterobacteria phage T4 (Bacteriophage T4).